Consider the following 179-residue polypeptide: Large ribosomal subunit protein uL5 (179 aa).

This sequence belongs to the universal ribosomal protein uL5 family. In terms of assembly, part of the 50S ribosomal subunit; part of the 5S rRNA/L5/L18/L25 subcomplex. Contacts the 5S rRNA and the P site tRNA. Forms a bridge to the 30S subunit in the 70S ribosome.

Functionally, this is one of the proteins that bind and probably mediate the attachment of the 5S RNA into the large ribosomal subunit, where it forms part of the central protuberance. In the 70S ribosome it contacts protein S13 of the 30S subunit (bridge B1b), connecting the 2 subunits; this bridge is implicated in subunit movement. Contacts the P site tRNA; the 5S rRNA and some of its associated proteins might help stabilize positioning of ribosome-bound tRNAs. The sequence is that of Large ribosomal subunit protein uL5 from Rickettsia typhi (strain ATCC VR-144 / Wilmington).